The primary structure comprises 756 residues: Probable chemoreceptor y4sI (756 aa).

The next 2 helical transmembrane spans lie at 26 to 46 and 330 to 350; these read VCVA…TSVA and LIKI…MAIL. HAMP domains are found at residues 353–406 and 434–486; these read RSIS…ARVA and DEQA…ETIR. In terms of domain architecture, Methyl-accepting transducer spans 491–720; it reads QAASMSSIVS…ESDAACRSLN (230 aa). The disordered stretch occupies residues 736–756; that stretch reads GGGSSTRQPQSPPTQRYFMSR.

This sequence belongs to the methyl-accepting chemotaxis (MCP) protein family.

Its subcellular location is the cell membrane. Its function is as follows. Chemotactic-signal transducers respond to changes in the concentration of attractants and repellents in the environment, transduce a signal from the outside to the inside of the cell, and facilitate sensory adaptation through the variation of the level of methylation. Attractants increase the level of methylation while repellents decrease the level of methylation. The protein is Probable chemoreceptor y4sI of Sinorhizobium fredii (strain NBRC 101917 / NGR234).